Reading from the N-terminus, the 265-residue chain is Putative methyltransferase 235L (265 aa).

The first 17 residues, 1-17 (MDICICYFFTILTTISC), serve as a signal peptide directing secretion.

Belongs to the methyltransferase superfamily.

The sequence is that of Putative methyltransferase 235L from Acheta domesticus (House cricket).